Here is a 204-residue protein sequence, read N- to C-terminus: Recombination protein RecR (204 aa).

The C4-type zinc finger occupies 63 to 78 (CRICFNVADSELCPIC). Residues 86 to 181 (NKICVVEQPQ…KVTRLARGLP (96 aa)) form the Toprim domain.

Belongs to the RecR family.

In terms of biological role, may play a role in DNA repair. It seems to be involved in an RecBC-independent recombinational process of DNA repair. It may act with RecF and RecO. The sequence is that of Recombination protein RecR from Dehalococcoides mccartyi (strain ATCC BAA-2266 / KCTC 15142 / 195) (Dehalococcoides ethenogenes (strain 195)).